The following is a 257-amino-acid chain: Isoprenyl transferase 1 (257 aa).

Residue Asp-37 is part of the active site. Residue Asp-37 participates in Mg(2+) binding. Substrate contacts are provided by residues 38–41, Trp-42, His-54, and 82–84; these read GNRR and STD. Asn-85 serves as the catalytic Proton acceptor. Substrate-binding positions include Phe-86, Arg-88, Arg-206, and 212–214; that span reads RLS. Glu-225 serves as a coordination point for Mg(2+).

The protein belongs to the UPP synthase family. In terms of assembly, homodimer. Mg(2+) serves as cofactor.

Its function is as follows. Catalyzes the condensation of isopentenyl diphosphate (IPP) with allylic pyrophosphates generating different type of terpenoids. The chain is Isoprenyl transferase 1 from Streptomyces avermitilis (strain ATCC 31267 / DSM 46492 / JCM 5070 / NBRC 14893 / NCIMB 12804 / NRRL 8165 / MA-4680).